The chain runs to 187 residues: RNA 2',3'-cyclic phosphodiesterase (187 aa).

His40 (proton donor) is an active-site residue. 2 consecutive short sequence motifs (HXTX) follow at residues 40-43 (HLTL) and 125-128 (HITI). His125 (proton acceptor) is an active-site residue.

The protein belongs to the 2H phosphoesterase superfamily. ThpR family.

The enzyme catalyses a 3'-end 2',3'-cyclophospho-ribonucleotide-RNA + H2O = a 3'-end 2'-phospho-ribonucleotide-RNA + H(+). Hydrolyzes RNA 2',3'-cyclic phosphodiester to an RNA 2'-phosphomonoester. This chain is RNA 2',3'-cyclic phosphodiesterase, found in Thermotoga maritima (strain ATCC 43589 / DSM 3109 / JCM 10099 / NBRC 100826 / MSB8).